Consider the following 242-residue polypeptide: MNYTLFVGDLHLSADRPDILNAFHQFLDQDASHCDALYILGDLFEVWVGDDIAEPFALELAERLKRFSTHTPIYFIHGNRDFLLGKEYAKRSGMTLLPEIYSIDLYGEPSVLLHGDSLCTLDKAYQRFRRFRNMAWAKFIYNHLPKSKRIAIADKLRSKSKQSNQIKSYSIMDVEQSAVEQLMAETGAKRMIHGHTHRPDIHRLANDTQRIVVGDWYEQGSVLKISPKEVNLQSLPFGETEA.

Residues D9, H11, D42, N79, and H114 each contribute to the Mn(2+) site. 79–80 (NR) is a binding site for substrate. D122, S160, N164, K167, and H195 together coordinate substrate. 2 residues coordinate Mn(2+): H195 and H197.

The protein belongs to the LpxH family. The cofactor is Mn(2+).

Its subcellular location is the cell inner membrane. The catalysed reaction is UDP-2-N,3-O-bis[(3R)-3-hydroxytetradecanoyl]-alpha-D-glucosamine + H2O = 2-N,3-O-bis[(3R)-3-hydroxytetradecanoyl]-alpha-D-glucosaminyl 1-phosphate + UMP + 2 H(+). Its pathway is glycolipid biosynthesis; lipid IV(A) biosynthesis; lipid IV(A) from (3R)-3-hydroxytetradecanoyl-[acyl-carrier-protein] and UDP-N-acetyl-alpha-D-glucosamine: step 4/6. Its function is as follows. Hydrolyzes the pyrophosphate bond of UDP-2,3-diacylglucosamine to yield 2,3-diacylglucosamine 1-phosphate (lipid X) and UMP by catalyzing the attack of water at the alpha-P atom. Involved in the biosynthesis of lipid A, a phosphorylated glycolipid that anchors the lipopolysaccharide to the outer membrane of the cell. This is UDP-2,3-diacylglucosamine hydrolase from Shewanella loihica (strain ATCC BAA-1088 / PV-4).